A 109-amino-acid polypeptide reads, in one-letter code: Nucleoid-associated protein Swoo_1794 (109 aa).

A disordered region spans residues 88–109 (QKDKMAEVTGGMQLPPGMKMPF).

Belongs to the YbaB/EbfC family. In terms of assembly, homodimer.

The protein resides in the cytoplasm. It is found in the nucleoid. Its function is as follows. Binds to DNA and alters its conformation. May be involved in regulation of gene expression, nucleoid organization and DNA protection. The sequence is that of Nucleoid-associated protein Swoo_1794 from Shewanella woodyi (strain ATCC 51908 / MS32).